A 443-amino-acid polypeptide reads, in one-letter code: Probable D-serine dehydratase (443 aa).

Lys-116 carries the post-translational modification N6-(pyridoxal phosphate)lysine.

It belongs to the serine/threonine dehydratase family. DsdA subfamily. The cofactor is pyridoxal 5'-phosphate.

It catalyses the reaction D-serine = pyruvate + NH4(+). The polypeptide is Probable D-serine dehydratase (Bacillus cereus (strain ATCC 14579 / DSM 31 / CCUG 7414 / JCM 2152 / NBRC 15305 / NCIMB 9373 / NCTC 2599 / NRRL B-3711)).